The sequence spans 1695 residues: Sialoadhesin (1695 aa).

The signal sequence occupies residues 1-19 (MCVLFSLLLLASVFSLGQT). The 117-residue stretch at 20–136 (TWGVSSPKNV…DVKGTTVTVT (117 aa)) folds into the Ig-like V-type domain. The Extracellular portion of the chain corresponds to 20-1639 (TWGVSSPKNV…ALHQLQLFQR (1620 aa)). 4 disulfide bridges follow: C36-C166, C41-C98, C160-C218, and C263-C306. Residues Y63, R116, and 122-126 (SNRWL) each bind N-acetylneuraminate. Ig-like C2-type domains follow at residues 153 to 235 (GMER…YLQV), 239 to 321 (PKGV…SPLS), 326 to 406 (MAEV…SPLS), 416 to 508 (PDLT…LDFY), 509 to 594 (ANVA…TVLT), 602 to 701 (PTFT…ASFN), 704 to 781 (ATVL…AQLS), 795 to 890 (PKLS…FQVR), 894 to 973 (VQVS…APVS), 980 to 1079 (PRHV…ADFD), 1081 to 1161 (QAVR…RPVT), 1172 to 1264 (RLTY…MNPS), 1245 to 1337 (KANT…ASLQ), 1342 to 1439 (PRDA…RLLT), 1442 to 1520 (DIRV…ATTS), and 1534 to 1627 (PTLI…AYFG). The N-linked (GlcNAc...) asparagine glycan is linked to N159. N-linked (GlcNAc...) asparagine glycans are attached at residues N266, N299, and N340. Cystine bridges form between C347-C391 and C434-C492. N500 carries an N-linked (GlcNAc...) asparagine glycan. A disulfide bridge connects residues C532 and C576. The N-linked (GlcNAc...) asparagine glycan is linked to N583. C625 and C685 are disulfide-bonded. Residues N693, N722, and N737 are each glycosylated (N-linked (GlcNAc...) asparagine). Disulfide bonds link C725/C770 and C813/C872. Residues 827-829 (RGD) carry the Cell attachment site motif. N-linked (GlcNAc...) asparagine glycosylation is present at N882. Disulfide bonds link C912-C956 and C1001-C1063. N-linked (GlcNAc...) asparagine glycans are attached at residues N1090 and N1100. Disulfide bonds link C1103–C1145 and C1189–C1237. N-linked (GlcNAc...) asparagine glycosylation is present at N1247. Intrachain disulfides connect C1277-C1320 and C1363-C1422. N-linked (GlcNAc...) asparagine glycosylation is found at N1460 and N1474. 2 disulfide bridges follow: C1463-C1509 and C1552-C1611. A helical membrane pass occupies residues 1640 to 1660 (LLWVLGFLAGFLCLLLGLVAY). The Cytoplasmic portion of the chain corresponds to 1661 to 1695 (HTWRKKSSTKLNEDENSAEMATKKNTIQEEVVAAL).

It belongs to the immunoglobulin superfamily. SIGLEC (sialic acid binding Ig-like lectin) family. As to quaternary structure, interacts with CLEC10A. As to expression, detected in lymph node in the subcapsular sinus, interfollicular regions, and T and B-cell boundary (at protein level). Expressed by macrophages in various tissues. Highest expression in spleen and lymph node with lower amounts in lung, liver, bone marrow, heart and skin. No expression in thymus, kidney, brain or small intestine.

It localises to the cell membrane. It is found in the secreted. Functionally, macrophage-restricted adhesion molecule that mediates sialic-acid dependent binding to lymphocytes, including granulocytes, monocytes, natural killer cells, B-cells and CD8 T-cells. Plays a crucial role in limiting bacterial dissemination by engaging sialylated bacteria to promote effective phagocytosis and antigen presentation for the adaptive immune response. Mediates the uptake of various enveloped viruses via sialic acid recognition and subsequently induces the formation of intracellular compartments filled with virions (VCCs). In turn, enhances macrophage-to-T-cell transmission of several viruses including murine leukemia virus. Acts as an endocytic receptor mediating clathrin dependent endocytosis. Preferentially binds to alpha-2,3-linked sialic acid. Binds to SPN/CD43 on T-cells. May play a role in hemopoiesis. Plays a role in the inhibition of antiviral innate immune by promoting TBK1 degradation via TYROBP and TRIM27-mediated ubiquitination. The polypeptide is Sialoadhesin (Siglec1) (Mus musculus (Mouse)).